A 479-amino-acid polypeptide reads, in one-letter code: Aspartyl/glutamyl-tRNA(Asn/Gln) amidotransferase subunit B (479 aa).

This sequence belongs to the GatB/GatE family. GatB subfamily. In terms of assembly, heterotrimer of A, B and C subunits.

It carries out the reaction L-glutamyl-tRNA(Gln) + L-glutamine + ATP + H2O = L-glutaminyl-tRNA(Gln) + L-glutamate + ADP + phosphate + H(+). The catalysed reaction is L-aspartyl-tRNA(Asn) + L-glutamine + ATP + H2O = L-asparaginyl-tRNA(Asn) + L-glutamate + ADP + phosphate + 2 H(+). Functionally, allows the formation of correctly charged Asn-tRNA(Asn) or Gln-tRNA(Gln) through the transamidation of misacylated Asp-tRNA(Asn) or Glu-tRNA(Gln) in organisms which lack either or both of asparaginyl-tRNA or glutaminyl-tRNA synthetases. The reaction takes place in the presence of glutamine and ATP through an activated phospho-Asp-tRNA(Asn) or phospho-Glu-tRNA(Gln). This is Aspartyl/glutamyl-tRNA(Asn/Gln) amidotransferase subunit B from Geotalea uraniireducens (strain Rf4) (Geobacter uraniireducens).